Consider the following 288-residue polypeptide: Diaminopimelate epimerase (288 aa).

Substrate contacts are provided by Asn-14 and Asn-67. Residue Cys-76 is the Proton donor of the active site. Substrate-binding positions include 77 to 78 (GN), Asn-166, Asn-199, and 217 to 218 (ER). The Proton acceptor role is filled by Cys-226. 227–228 (GT) provides a ligand contact to substrate.

This sequence belongs to the diaminopimelate epimerase family. As to quaternary structure, homodimer.

Its subcellular location is the cytoplasm. The catalysed reaction is (2S,6S)-2,6-diaminopimelate = meso-2,6-diaminopimelate. Its pathway is amino-acid biosynthesis; L-lysine biosynthesis via DAP pathway; DL-2,6-diaminopimelate from LL-2,6-diaminopimelate: step 1/1. Catalyzes the stereoinversion of LL-2,6-diaminopimelate (L,L-DAP) to meso-diaminopimelate (meso-DAP), a precursor of L-lysine and an essential component of the bacterial peptidoglycan. The sequence is that of Diaminopimelate epimerase from Bacillus anthracis (strain A0248).